We begin with the raw amino-acid sequence, 131 residues long: Profilin-5 (131 aa).

An intrachain disulfide couples cysteine 13 to cysteine 115. Positions 81–97 match the Involved in PIP2 interaction motif; sequence VVIRGKKGTGGITIKKT. Threonine 111 bears the Phosphothreonine mark.

This sequence belongs to the profilin family. As to quaternary structure, multimer. Occurs in many kinds of cells as a complex with monomeric actin in a 1:1 ratio. Phosphorylated by MAP kinases. As to expression, expressed in vegetative tissues. Present in shoots, roots and coleoptiles. Also detected in endosperm and pollen.

It is found in the cytoplasm. Its subcellular location is the cytoskeleton. Its activity is regulated as follows. Actin binding is enhanced by calcium Ca(2+). Binds to actin and affects the structure of the cytoskeleton. At high concentrations, profilin prevents the polymerization of actin, whereas it enhances it at low concentrations. By binding to PIP2, it inhibits the formation of IP3 and DG. Has a high affinity for poly-proline. The chain is Profilin-5 from Zea mays (Maize).